The chain runs to 294 residues: Homoserine kinase (294 aa).

84 to 94 (PFSRGLGSSSA) contacts ATP.

It belongs to the GHMP kinase family. Homoserine kinase subfamily.

The protein localises to the cytoplasm. It carries out the reaction L-homoserine + ATP = O-phospho-L-homoserine + ADP + H(+). It functions in the pathway amino-acid biosynthesis; L-threonine biosynthesis; L-threonine from L-aspartate: step 4/5. Its function is as follows. Catalyzes the ATP-dependent phosphorylation of L-homoserine to L-homoserine phosphate. The protein is Homoserine kinase of Campylobacter concisus (strain 13826).